Consider the following 162-residue polypeptide: Transcription elongation factor GreA (162 aa).

Positions 45-74 form a coiled coil; it reads ENAEYEAAREKQAFIEGRIKELEDMTARAE.

It belongs to the GreA/GreB family.

In terms of biological role, necessary for efficient RNA polymerase transcription elongation past template-encoded arresting sites. The arresting sites in DNA have the property of trapping a certain fraction of elongating RNA polymerases that pass through, resulting in locked ternary complexes. Cleavage of the nascent transcript by cleavage factors such as GreA or GreB allows the resumption of elongation from the new 3'terminus. GreA releases sequences of 2 to 3 nucleotides. In Rickettsia felis (strain ATCC VR-1525 / URRWXCal2) (Rickettsia azadi), this protein is Transcription elongation factor GreA.